The primary structure comprises 361 residues: Peptide chain release factor 1 (361 aa).

Gln-235 is modified (N5-methylglutamine).

The protein belongs to the prokaryotic/mitochondrial release factor family. Post-translationally, methylated by PrmC. Methylation increases the termination efficiency of RF1.

Its subcellular location is the cytoplasm. Functionally, peptide chain release factor 1 directs the termination of translation in response to the peptide chain termination codons UAG and UAA. This chain is Peptide chain release factor 1, found in Xanthomonas campestris pv. campestris (strain B100).